The primary structure comprises 206 residues: Dephospho-CoA kinase (206 aa).

Residues 4-204 (VIGLTGGIAS…EGYIESHSED (201 aa)) enclose the DPCK domain. 12-17 (ASGKST) lines the ATP pocket.

The protein belongs to the CoaE family.

The protein resides in the cytoplasm. It carries out the reaction 3'-dephospho-CoA + ATP = ADP + CoA + H(+). The protein operates within cofactor biosynthesis; coenzyme A biosynthesis; CoA from (R)-pantothenate: step 5/5. Catalyzes the phosphorylation of the 3'-hydroxyl group of dephosphocoenzyme A to form coenzyme A. The protein is Dephospho-CoA kinase of Staphylococcus saprophyticus subsp. saprophyticus (strain ATCC 15305 / DSM 20229 / NCIMB 8711 / NCTC 7292 / S-41).